The following is a 122-amino-acid chain: MIQQESRLRVADNTGAREILCIRVLGGSGRRYAGIGDIIVGTVKDALPGAGVKRGDVVKAVVVRTTKERRRPDGSYIRFDENAAVLIRDGGDPRGTRIFGPVGRELRDKKFMKIISLAPEVL.

Belongs to the universal ribosomal protein uL14 family. As to quaternary structure, part of the 50S ribosomal subunit. Forms a cluster with proteins L3 and L19. In the 70S ribosome, L14 and L19 interact and together make contacts with the 16S rRNA in bridges B5 and B8.

In terms of biological role, binds to 23S rRNA. Forms part of two intersubunit bridges in the 70S ribosome. In Frankia alni (strain DSM 45986 / CECT 9034 / ACN14a), this protein is Large ribosomal subunit protein uL14.